The sequence spans 190 residues: Prostaglandin-H2 D-isomerase (190 aa).

Positions 1–22 (MATHHTLWMGLALLGVLGDLQA) are cleaved as a signal peptide. Ser-29 carries an O-linked (GalNAc...) serine glycan. Residue Asn-51 is glycosylated (N-linked (GlcNAc...) (complex) asparagine). The active-site Nucleophile is the Cys-65. The N-linked (GlcNAc...) (complex) asparagine glycan is linked to Asn-78. Cys-89 and Cys-186 are disulfide-bonded.

The protein belongs to the calycin superfamily. Lipocalin family. As to quaternary structure, monomer. N- and O-glycosylated. Both N-glycosylation recognition sites are almost quantitatively occupied by N-glycans of the biantennary complex type, with a considerable proportion of structures bearing a bisecting GlcNAc. N-glycan at Asn-78: dHex1Hex5HexNAc4. Agalacto structure as well as sialylated and nonsialylated oligosaccharides bearing alpha2-3- and/or alpha2-6-linked NeuNAc are present. In terms of tissue distribution, abundant in the brain and CNS, where it is expressed in tissues of the blood-brain barrier and secreted into the cerebro-spinal fluid. Abundantly expressed in the heart. In the male reproductive system, it is expressed in the testis, epididymis and prostate, and is secreted into the seminal fluid. Expressed in the eye and secreted into the aqueous humor. Lower levels detected in various tissue fluids such as serum, normal urine, ascitic fluid and tear fluid. Also found in a number of other organs including ovary, fimbriae of the fallopian tubes, kidney, leukocytes.

It is found in the rough endoplasmic reticulum. The protein resides in the nucleus membrane. It localises to the golgi apparatus. The protein localises to the cytoplasm. Its subcellular location is the perinuclear region. It is found in the secreted. It carries out the reaction prostaglandin H2 = prostaglandin D2. Catalyzes the conversion of PGH2 to PGD2, a prostaglandin involved in smooth muscle contraction/relaxation and a potent inhibitor of platelet aggregation. Involved in a variety of CNS functions, such as sedation, NREM sleep and PGE2-induced allodynia, and may have an anti-apoptotic role in oligodendrocytes. Binds small non-substrate lipophilic molecules, including biliverdin, bilirubin, retinal, retinoic acid and thyroid hormone, and may act as a scavenger for harmful hydrophobic molecules and as a secretory retinoid and thyroid hormone transporter. Possibly involved in development and maintenance of the blood-brain, blood-retina, blood-aqueous humor and blood-testis barrier. It is likely to play important roles in both maturation and maintenance of the central nervous system and male reproductive system. Involved in PLA2G3-dependent maturation of mast cells. PLA2G3 is secreted by immature mast cells and acts on nearby fibroblasts upstream to PTDGS to synthesize PGD2, which in turn promotes mast cell maturation and degranulation via PTGDR. The protein is Prostaglandin-H2 D-isomerase (PTGDS) of Homo sapiens (Human).